The primary structure comprises 295 residues: 4-hydroxybenzoate octaprenyltransferase (295 aa).

Helical transmembrane passes span 28-48 (PIGIYLLLWPTLWAVWIAADG), 55-75 (VLIFTCGVILMRSAGCVINDF), 103-123 (WALFAVLVALSFGLVLLTDPF), 147-167 (LPQLVLGAAYSWGIPMAFTAA), 175-195 (AWLIFAANLAWTVAYDTYYAM), 219-239 (AIILALQGLTLGLLLVVGMRL), 241-261 (LGPYFHLGLLVAALCFAWEFV), and 275-295 (FLHNHWAGLAILVGLILDYGI).

This sequence belongs to the UbiA prenyltransferase family. Requires Mg(2+) as cofactor.

The protein localises to the cell inner membrane. It catalyses the reaction all-trans-octaprenyl diphosphate + 4-hydroxybenzoate = 4-hydroxy-3-(all-trans-octaprenyl)benzoate + diphosphate. It participates in cofactor biosynthesis; ubiquinone biosynthesis. Its function is as follows. Catalyzes the prenylation of para-hydroxybenzoate (PHB) with an all-trans polyprenyl group. Mediates the second step in the final reaction sequence of ubiquinone-8 (UQ-8) biosynthesis, which is the condensation of the polyisoprenoid side chain with PHB, generating the first membrane-bound Q intermediate 3-octaprenyl-4-hydroxybenzoate. In Azotobacter vinelandii (strain DJ / ATCC BAA-1303), this protein is 4-hydroxybenzoate octaprenyltransferase.